Consider the following 156-residue polypeptide: IFN signaling evasion protein OPG029 (156 aa).

This sequence belongs to the orthopoxvirus OPG029 family. In terms of assembly, interacts with host TANK, TBKBP1 and AZI2; these interactions prevent interferon production. Interacts with host STAT2.

Prevents establishment of cellular antiviral state by blocking virus-induced phosphorylation and activation of interferon regulatory factors 3/IRF3 and 7/IRF7, transcription factors critical for the induction of interferons alpha and beta. This blockage is produced through the inhibition of host TBK1, by binding host TBK1 adapter proteins TBKBP1 and AZI2, thereby producing a strong inhibition of the phosphorylation and activation of IRF3 and IRF7. Also acts as an inhibitor of the cellular response to type I IFN by interacting with host STAT2. Mechanistically, exerts its inhibitory effect after host ISGF3 complex (composed of STAT1, STAT2 and IRF9) binding to the interferon stimulated response element (ISRE). The polypeptide is IFN signaling evasion protein OPG029 (OPG029) (Variola virus (isolate Human/India/Ind3/1967) (VARV)).